The sequence spans 217 residues: Probable transaldolase (217 aa).

Residue Lys-83 is the Schiff-base intermediate with substrate of the active site.

Belongs to the transaldolase family. Type 3B subfamily.

It is found in the cytoplasm. The enzyme catalyses D-sedoheptulose 7-phosphate + D-glyceraldehyde 3-phosphate = D-erythrose 4-phosphate + beta-D-fructose 6-phosphate. It functions in the pathway carbohydrate degradation; pentose phosphate pathway; D-glyceraldehyde 3-phosphate and beta-D-fructose 6-phosphate from D-ribose 5-phosphate and D-xylulose 5-phosphate (non-oxidative stage): step 2/3. In terms of biological role, transaldolase is important for the balance of metabolites in the pentose-phosphate pathway. This Hydrogenobaculum sp. (strain Y04AAS1) protein is Probable transaldolase.